Reading from the N-terminus, the 128-residue chain is Large ribosomal subunit protein bL12 (128 aa).

It belongs to the bacterial ribosomal protein bL12 family. In terms of assembly, homodimer. Part of the ribosomal stalk of the 50S ribosomal subunit. Forms a multimeric L10(L12)X complex, where L10 forms an elongated spine to which 2 to 4 L12 dimers bind in a sequential fashion. Binds GTP-bound translation factors.

Forms part of the ribosomal stalk which helps the ribosome interact with GTP-bound translation factors. Is thus essential for accurate translation. This Kosmotoga olearia (strain ATCC BAA-1733 / DSM 21960 / TBF 19.5.1) protein is Large ribosomal subunit protein bL12.